We begin with the raw amino-acid sequence, 196 residues long: MKPVVVFVLGGPGAGKGTQCARIVEKYGYTHLSAGDLLRDERKRPGSQYGELIENYIKEGEIVPVEITISLLKRAMDQTMAANSQKNKFLIDGFPRNEDNLQGWNKTMDGKADVSFVLFFDCDNEICIGRCLERGKSSGRSDDNRESLEKRIHTYLQSTRPIIDLYERMGKVRRVDASKSVDEVFEKVVQIFDKEG.

13 to 18 provides a ligand contact to ATP; that stretch reads GAGKGT. Residues 33 to 63 are NMP; sequence SAGDLLRDERKRPGSQYGELIENYIKEGEIV. A ribonucleoside 5'-phosphate contacts are provided by residues R39, 61-63, and 93-96; these read EIV and GFPR. N100 provides a ligand contact to CMP. Residues 133-143 form an LID region; sequence ERGKSSGRSDD. R134 contributes to the ATP binding site. The a ribonucleoside 5'-phosphate site is built by R140 and R151. K179 provides a ligand contact to ATP.

It belongs to the adenylate kinase family. UMP-CMP kinase subfamily. Monomer. Mg(2+) is required as a cofactor.

Its subcellular location is the nucleus. It is found in the cytoplasm. The catalysed reaction is CMP + ATP = CDP + ADP. It catalyses the reaction dCMP + ATP = dCDP + ADP. It carries out the reaction UMP + ATP = UDP + ADP. The enzyme catalyses a 2'-deoxyribonucleoside 5'-diphosphate + ATP = a 2'-deoxyribonucleoside 5'-triphosphate + ADP. The catalysed reaction is a ribonucleoside 5'-diphosphate + ATP = a ribonucleoside 5'-triphosphate + ADP. In terms of biological role, catalyzes the phosphorylation of pyrimidine nucleoside monophosphates at the expense of ATP. Plays an important role in de novo pyrimidine nucleotide biosynthesis. Has preference for UMP and CMP as phosphate acceptors. Also displays broad nucleoside diphosphate kinase activity. The chain is UMP-CMP kinase (CMPK) from Gallus gallus (Chicken).